Reading from the N-terminus, the 677-residue chain is Methionine--tRNA ligase (677 aa).

The 'HIGH' region signature appears at 15–25 (PYANGSIHLGH). Positions 146, 149, 159, and 162 each coordinate Zn(2+). A 'KMSKS' region motif is present at residues 333–337 (KMSKS). An ATP-binding site is contributed by Lys336. The region spanning 575–677 (DFAKIDLRVA…DGAKPGQQVK (103 aa)) is the tRNA-binding domain.

It belongs to the class-I aminoacyl-tRNA synthetase family. MetG type 1 subfamily. Homodimer. Zn(2+) serves as cofactor.

The protein localises to the cytoplasm. The catalysed reaction is tRNA(Met) + L-methionine + ATP = L-methionyl-tRNA(Met) + AMP + diphosphate. Its function is as follows. Is required not only for elongation of protein synthesis but also for the initiation of all mRNA translation through initiator tRNA(fMet) aminoacylation. This is Methionine--tRNA ligase from Salmonella choleraesuis (strain SC-B67).